Here is a 303-residue protein sequence, read N- to C-terminus: Protein bottleneck (303 aa).

Disordered regions lie at residues S102–T142 and V185–R272. Low complexity-rich tracts occupy residues R115 to E138 and V185 to S197. The span at A260–R272 shows a compositional bias: polar residues.

As to expression, restricted to the blastoderm.

Its subcellular location is the cytoplasm. The protein localises to the cytoskeleton. In terms of biological role, acts as a regulator of the microfilament network governing cellularization of the embryo. Determines the timing of a key conformational transition in the cortical microfilament network: the proper coordination of membrane invagination and basal closure of the cells. To do this, bnk possibly physically links neighboring contractile units of the early cycle 14 microfilament network in a manner that prevents basal constriction until the proper stage has been reached. Bnk together with nullo and Sry-alpha may provide auxiliary functions, by acting both to stabilize a large and dynamic microfilament structure and regulate its functions. The sequence is that of Protein bottleneck (bnk) from Drosophila melanogaster (Fruit fly).